A 357-amino-acid chain; its full sequence is Dual-specificity RNA methyltransferase RlmN (357 aa).

E89 acts as the Proton acceptor in catalysis. In terms of domain architecture, Radical SAM core spans 109–340; the sequence is EGEKYTVCVS…CTIRESKALD (232 aa). C116 and C345 form a disulfide bridge. [4Fe-4S] cluster-binding residues include C123, C127, and C130. S-adenosyl-L-methionine is bound by residues 173–174, S203, 226–228, and N302; these read GE and SLH. The active-site S-methylcysteine intermediate is C345.

The protein belongs to the radical SAM superfamily. RlmN family. It depends on [4Fe-4S] cluster as a cofactor.

The protein localises to the cytoplasm. It carries out the reaction adenosine(2503) in 23S rRNA + 2 reduced [2Fe-2S]-[ferredoxin] + 2 S-adenosyl-L-methionine = 2-methyladenosine(2503) in 23S rRNA + 5'-deoxyadenosine + L-methionine + 2 oxidized [2Fe-2S]-[ferredoxin] + S-adenosyl-L-homocysteine. The enzyme catalyses adenosine(37) in tRNA + 2 reduced [2Fe-2S]-[ferredoxin] + 2 S-adenosyl-L-methionine = 2-methyladenosine(37) in tRNA + 5'-deoxyadenosine + L-methionine + 2 oxidized [2Fe-2S]-[ferredoxin] + S-adenosyl-L-homocysteine. Functionally, specifically methylates position 2 of adenine 2503 in 23S rRNA and position 2 of adenine 37 in tRNAs. m2A2503 modification seems to play a crucial role in the proofreading step occurring at the peptidyl transferase center and thus would serve to optimize ribosomal fidelity. This is Dual-specificity RNA methyltransferase RlmN from Helicobacter pylori (strain J99 / ATCC 700824) (Campylobacter pylori J99).